Reading from the N-terminus, the 395-residue chain is Scyllo-inosose 3-dehydrogenase (395 aa).

C66 contacts Zn(2+). Catalysis depends on charge relay system residues S68 and H71. H95, E96, C131, C134, C137, C145, and E193 together coordinate Zn(2+). I223, E243, and R248 together coordinate NAD(+).

It belongs to the zinc-containing alcohol dehydrogenase family. Homodimer. The cofactor is Zn(2+).

The enzyme catalyses scyllo-inosose + NAD(+) = 3-dehydro-scyllo-inosose + NADH + H(+). The protein operates within polyol metabolism; myo-inositol metabolism. Its function is as follows. Catalyzes the NAD(+)-dependent oxidation of scyllo-inosose (2-keto-myo-inositol) to 3-dehydro-scyllo-inosose (diketo-inositol), and thus probably functions in a myo-inositol degradation pathway together with IolG, IolN and IolO. Has no activity on myo-inositol, D-chiro-inositol and 1-keto-D-chiro-inositol. This chain is Scyllo-inosose 3-dehydrogenase, found in Thermotoga maritima (strain ATCC 43589 / DSM 3109 / JCM 10099 / NBRC 100826 / MSB8).